Consider the following 259-residue polypeptide: Hydroxyethylthiazole kinase (259 aa).

M50 contributes to the substrate binding site. ATP is bound by residues R122 and T168. G195 lines the substrate pocket.

This sequence belongs to the Thz kinase family. Requires Mg(2+) as cofactor.

It catalyses the reaction 5-(2-hydroxyethyl)-4-methylthiazole + ATP = 4-methyl-5-(2-phosphooxyethyl)-thiazole + ADP + H(+). Its pathway is cofactor biosynthesis; thiamine diphosphate biosynthesis; 4-methyl-5-(2-phosphoethyl)-thiazole from 5-(2-hydroxyethyl)-4-methylthiazole: step 1/1. In terms of biological role, catalyzes the phosphorylation of the hydroxyl group of 4-methyl-5-beta-hydroxyethylthiazole (THZ). The protein is Hydroxyethylthiazole kinase of Escherichia coli O127:H6 (strain E2348/69 / EPEC).